Here is a 248-residue protein sequence, read N- to C-terminus: Adenosylcobinamide-GDP ribazoletransferase (248 aa).

The next 7 membrane-spanning stretches (helical) occupy residues Glu24 to Trp44, Val70 to Ser90, Val106 to Leu126, Ile134 to Ala154, Ile168 to Leu188, Gly189 to Ile209, and Ala228 to Val248.

Belongs to the CobS family. The cofactor is Mg(2+).

Its subcellular location is the cell membrane. The catalysed reaction is alpha-ribazole + adenosylcob(III)inamide-GDP = adenosylcob(III)alamin + GMP + H(+). The enzyme catalyses alpha-ribazole 5'-phosphate + adenosylcob(III)inamide-GDP = adenosylcob(III)alamin 5'-phosphate + GMP + H(+). It participates in cofactor biosynthesis; adenosylcobalamin biosynthesis; adenosylcobalamin from cob(II)yrinate a,c-diamide: step 7/7. In terms of biological role, joins adenosylcobinamide-GDP and alpha-ribazole to generate adenosylcobalamin (Ado-cobalamin). Also synthesizes adenosylcobalamin 5'-phosphate from adenosylcobinamide-GDP and alpha-ribazole 5'-phosphate. The chain is Adenosylcobinamide-GDP ribazoletransferase from Listeria monocytogenes serovar 1/2a (strain ATCC BAA-679 / EGD-e).